A 353-amino-acid polypeptide reads, in one-letter code: uncharacterized protein (353 aa).

The protein belongs to the mimivirus L17x/L18x family.

This is an uncharacterized protein from Acanthamoeba polyphaga (Amoeba).